Here is a 258-residue protein sequence, read N- to C-terminus: Acetylglutamate kinase (258 aa).

Substrate contacts are provided by residues 41–42 (GG), arginine 63, and asparagine 156.

This sequence belongs to the acetylglutamate kinase family. ArgB subfamily.

It is found in the cytoplasm. It catalyses the reaction N-acetyl-L-glutamate + ATP = N-acetyl-L-glutamyl 5-phosphate + ADP. Its pathway is amino-acid biosynthesis; L-arginine biosynthesis; N(2)-acetyl-L-ornithine from L-glutamate: step 2/4. Its function is as follows. Catalyzes the ATP-dependent phosphorylation of N-acetyl-L-glutamate. This is Acetylglutamate kinase from Bacillus licheniformis (strain ATCC 14580 / DSM 13 / JCM 2505 / CCUG 7422 / NBRC 12200 / NCIMB 9375 / NCTC 10341 / NRRL NRS-1264 / Gibson 46).